A 913-amino-acid chain; its full sequence is Proline and serine-rich protein 1 (913 aa).

Residue Met1 is modified to N-acetylmethionine. 4 disordered regions span residues 233–291 (VPPP…PAVS), 488–507 (ASLS…ATNK), 592–618 (SEPT…TLGL), and 888–913 (DGFP…SGWQ). Positions 251 to 275 (LSSQSKPTQSQTFSTPASQLFSPHG) are enriched in polar residues. A compositionally biased stretch (low complexity) spans 276 to 291 (SSNPSTPAATPVPAVS). The span at 488 to 506 (ASLSSLPNRNSDSPASATN) shows a compositional bias: polar residues. The segment covering 893-913 (YPSTPGTPFSLQTGLSQSGWQ) has biased composition (polar residues).

Interacts with TET2 and OGT; this interaction mediates TET2 O-GlcNAcylation and stability by promoting the interaction between OGT and TET2. Interacts with KDM6A. Interacts with TET1. In terms of processing, glycosylated. Interaction with OGT leads to GlcNAcylation.

In terms of biological role, mediates OGT interaction with and O-GlcNAcylation of TET2 to control TET2 stabilization at enhancers and CpG islands (CGIs). The chain is Proline and serine-rich protein 1 from Mus musculus (Mouse).